The chain runs to 477 residues: Proline--tRNA ligase (477 aa).

The protein belongs to the class-II aminoacyl-tRNA synthetase family. ProS type 3 subfamily. Homodimer.

Its subcellular location is the cytoplasm. The catalysed reaction is tRNA(Pro) + L-proline + ATP = L-prolyl-tRNA(Pro) + AMP + diphosphate. Functionally, catalyzes the attachment of proline to tRNA(Pro) in a two-step reaction: proline is first activated by ATP to form Pro-AMP and then transferred to the acceptor end of tRNA(Pro). The sequence is that of Proline--tRNA ligase from Methanocorpusculum labreanum (strain ATCC 43576 / DSM 4855 / Z).